The primary structure comprises 607 residues: Fucose-1-phosphate guanylyltransferase (607 aa).

Residues 1-21 form a disordered region; that stretch reads MRAVRRGLREGGAMAAARDPP.

As to expression, expressed in many tissues.

It is found in the cytoplasm. It carries out the reaction beta-L-fucose 1-phosphate + GTP + H(+) = GDP-beta-L-fucose + diphosphate. Catalyzes the formation of GDP-L-fucose from GTP and L-fucose-1-phosphate. Functions as a salvage pathway to reutilize L-fucose arising from the turnover of glycoproteins and glycolipids. The chain is Fucose-1-phosphate guanylyltransferase from Homo sapiens (Human).